The chain runs to 296 residues: uncharacterized protein (296 aa).

Transmembrane regions (helical) follow at residues 1–21, 30–50, 71–91, 92–112, 113–133, and 142–162; these read MVNL…IFDY, LITA…GFWL, FISF…FVLC, LAQL…STLA, IGLA…LVLF, and IEVA…TTIC.

Belongs to the MscS (TC 1.A.23) family.

It is found in the cell membrane. This is an uncharacterized protein from Synechocystis sp. (strain ATCC 27184 / PCC 6803 / Kazusa).